Here is a 539-residue protein sequence, read N- to C-terminus: Phosphoenolpyruvate carboxykinase (ATP) (539 aa).

Residues Arg-64, Tyr-206, and Lys-212 each contribute to the substrate site. ATP-binding positions include Lys-212, His-231, and 247–255 (GLSGTGKTT). Mn(2+) contacts are provided by Lys-212 and His-231. Asp-268 lines the Mn(2+) pocket. ATP is bound by residues Glu-296, Arg-332, 448–449 (RI), and Thr-454. Position 332 (Arg-332) interacts with substrate.

This sequence belongs to the phosphoenolpyruvate carboxykinase (ATP) family. As to quaternary structure, monomer. The cofactor is Mn(2+).

It is found in the cytoplasm. The enzyme catalyses oxaloacetate + ATP = phosphoenolpyruvate + ADP + CO2. It participates in carbohydrate biosynthesis; gluconeogenesis. Functionally, involved in the gluconeogenesis. Catalyzes the conversion of oxaloacetate (OAA) to phosphoenolpyruvate (PEP) through direct phosphoryl transfer between the nucleoside triphosphate and OAA. The chain is Phosphoenolpyruvate carboxykinase (ATP) from Salmonella gallinarum (strain 287/91 / NCTC 13346).